Here is a 276-residue protein sequence, read N- to C-terminus: Formamidopyrimidine-DNA glycosylase (276 aa).

P2 (schiff-base intermediate with DNA) is an active-site residue. E3 acts as the Proton donor in catalysis. The active-site Proton donor; for beta-elimination activity is K58. Residues H92, R111, and K154 each coordinate DNA. The FPG-type zinc-finger motif lies at 239-273; that stretch reads QVYGHVGEPCPVCGTKFEKIKVNGRGTTFCPHCQV. Catalysis depends on R263, which acts as the Proton donor; for delta-elimination activity.

It belongs to the FPG family. As to quaternary structure, monomer. Zn(2+) is required as a cofactor.

It catalyses the reaction Hydrolysis of DNA containing ring-opened 7-methylguanine residues, releasing 2,6-diamino-4-hydroxy-5-(N-methyl)formamidopyrimidine.. The catalysed reaction is 2'-deoxyribonucleotide-(2'-deoxyribose 5'-phosphate)-2'-deoxyribonucleotide-DNA = a 3'-end 2'-deoxyribonucleotide-(2,3-dehydro-2,3-deoxyribose 5'-phosphate)-DNA + a 5'-end 5'-phospho-2'-deoxyribonucleoside-DNA + H(+). Involved in base excision repair of DNA damaged by oxidation or by mutagenic agents. Acts as a DNA glycosylase that recognizes and removes damaged bases. Has a preference for oxidized purines, such as 7,8-dihydro-8-oxoguanine (8-oxoG). Has AP (apurinic/apyrimidinic) lyase activity and introduces nicks in the DNA strand. Cleaves the DNA backbone by beta-delta elimination to generate a single-strand break at the site of the removed base with both 3'- and 5'-phosphates. The polypeptide is Formamidopyrimidine-DNA glycosylase (Lactobacillus helveticus (strain DPC 4571)).